The following is a 125-amino-acid chain: Ribosome-binding factor A (125 aa).

It belongs to the RbfA family. In terms of assembly, monomer. Binds 30S ribosomal subunits, but not 50S ribosomal subunits or 70S ribosomes.

It is found in the cytoplasm. In terms of biological role, one of several proteins that assist in the late maturation steps of the functional core of the 30S ribosomal subunit. Associates with free 30S ribosomal subunits (but not with 30S subunits that are part of 70S ribosomes or polysomes). Required for efficient processing of 16S rRNA. May interact with the 5'-terminal helix region of 16S rRNA. The protein is Ribosome-binding factor A of Carboxydothermus hydrogenoformans (strain ATCC BAA-161 / DSM 6008 / Z-2901).